Here is a 301-residue protein sequence, read N- to C-terminus: GTPase Era (301 aa).

The Era-type G domain maps to 7–173 (KSGFVALLGR…LNTINKYLPE (167 aa)). The interval 15-22 (GRPNVGKS) is G1. Position 15–22 (15–22 (GRPNVGKS)) interacts with GTP. The interval 41–45 (QTTRN) is G2. A G3 region spans residues 62–65 (DTPG). GTP-binding positions include 62-66 (DTPGI) and 123-126 (NKVD). Residues 123-126 (NKVD) form a G4 region. The segment at 152 to 154 (ISA) is G5. Residues 204-281 (TSQEVPHATA…NLRLWVKVQH (78 aa)) enclose the KH type-2 domain.

The protein belongs to the TRAFAC class TrmE-Era-EngA-EngB-Septin-like GTPase superfamily. Era GTPase family. Monomer.

Its subcellular location is the cytoplasm. It localises to the cell membrane. An essential GTPase that binds both GDP and GTP, with rapid nucleotide exchange. Plays a role in 16S rRNA processing and 30S ribosomal subunit biogenesis and possibly also in cell cycle regulation and energy metabolism. The protein is GTPase Era of Lactobacillus helveticus (strain DPC 4571).